Reading from the N-terminus, the 138-residue chain is Acidic phospholipase A2 Cvv-E6f (138 aa).

A signal peptide spans 1-16 (MRTLWIVAVLLLGVEG). Intrachain disulfides connect cysteine 42/cysteine 131, cysteine 44/cysteine 60, cysteine 59/cysteine 111, cysteine 65/cysteine 138, cysteine 66/cysteine 104, cysteine 73/cysteine 97, and cysteine 91/cysteine 102. Ca(2+) is bound by residues tyrosine 43, glycine 45, and glycine 47. Histidine 63 is an active-site residue. Aspartate 64 contacts Ca(2+). Residue aspartate 105 is part of the active site.

Ca(2+) is required as a cofactor. Expressed by the venom gland.

It localises to the secreted. The enzyme catalyses a 1,2-diacyl-sn-glycero-3-phosphocholine + H2O = a 1-acyl-sn-glycero-3-phosphocholine + a fatty acid + H(+). In terms of biological role, snake venom phospholipase A2 (PLA2) that shows very low inhibition of ADP-induced platelet aggregation in platelet-rich plasma of human, rabbit and guinea pig. In vivo, shows efficient edema-inducing activities in rat paws. PLA2 catalyzes the calcium-dependent hydrolysis of the 2-acyl groups in 3-sn-phosphoglycerides. The sequence is that of Acidic phospholipase A2 Cvv-E6f from Crotalus viridis viridis (Prairie rattlesnake).